A 275-amino-acid polypeptide reads, in one-letter code: Exosome complex component Rrp42 (275 aa).

Belongs to the RNase PH family. Rrp42 subfamily. Component of the archaeal exosome complex. Forms a hexameric ring-like arrangement composed of 3 Rrp41-Rrp42 heterodimers. The hexameric ring associates with a trimer of Rrp4 and/or Csl4 subunits.

The protein resides in the cytoplasm. In terms of biological role, non-catalytic component of the exosome, which is a complex involved in RNA degradation. Contributes to the structuring of the Rrp41 active site. This Sulfurisphaera tokodaii (strain DSM 16993 / JCM 10545 / NBRC 100140 / 7) (Sulfolobus tokodaii) protein is Exosome complex component Rrp42.